Here is a 470-residue protein sequence, read N- to C-terminus: MNRHISEILEKYLGRIPSLTEYHTLKSQYKNIHRVNIFNKDIFISLIKKNKKKFFSDIDTSVSEIKKLVFDYFTKQEQTYSIGKLYTIIELQTILVTTYTDILGVLTTKGPDIFSSNVQYNTSSMQKIANDALNSMNIATISDKVMGRHNVSSLVCNVNSLMEEYLRRHNKSCICYGSYSLHLLNPEIKYGDIDILQTNSRTFLIDLAFLIKFITGYNVILLKVPYLKNYMVLKDQNDSHIIDSFNIRQETMQHIPKILIDNIYIVDPTIQLLSMLKMLSQIDRLEDLAKNPDKLTIRFATLLEYVRNKYGIILNGNSNNMPMPSTIDIKKRIITVDTKYYNFAYDKCYVYLDENSLSSDILSLNADDAVDFENVSNSAFLVNDKTLYTYFSNTILLSGNDKIHEISSRGISAHILIYQALMKYDISIPLTDIVNSLIGRNKQPIYEIIPRDKKTGKHGIIDIEKDIITH.

Residues aspartate 192 and aspartate 194 contribute to the active site.

This sequence belongs to the poxviridae poly(A) polymerase catalytic subunit family. As to quaternary structure, heterodimer of a large (catalytic) subunit and a small (regulatory) subunit.

The catalysed reaction is RNA(n) + ATP = RNA(n)-3'-adenine ribonucleotide + diphosphate. Polymerase that creates the 3'-poly(A) tail of mRNA's. This is Poly(A) polymerase catalytic subunit (PAPL) from Deerpox virus (strain Mule deer/United States/W-848-83/1983) (DPV).